The chain runs to 421 residues: Testin (421 aa).

Residues 92–199 (MILTNPVAAK…GDVKLPCEMD (108 aa)) form the PET domain. The tract at residues 133-164 (EKQPVAGSEGAQYRKKQLAKQLPAHDQDPSKC) is disordered. Residues 155–164 (PAHDQDPSKC) show a composition bias toward basic and acidic residues. LIM zinc-binding domains are found at residues 234-297 (YSCY…CDSE), 299-359 (PRCA…NHAV), and 362-421 (QGCH…KMMS).

It belongs to the prickle / espinas / testin family. Interacts via LIM domain 1 with ZYX. Interacts (via LIM domain 3) with ENAH and VASP. Interacts with ALKBH4, talin, actin, alpha-actinin, GRIP1 and PXN. Interacts (via LIM domain 2) with ACTL7A (via N-terminus). Heterodimer with ACTL7A; the heterodimer interacts with ENAH to form a heterotrimer.

The protein resides in the cytoplasm. The protein localises to the cell junction. Its subcellular location is the focal adhesion. Functionally, scaffold protein that may play a role in cell adhesion, cell spreading and in the reorganization of the actin cytoskeleton. Plays a role in the regulation of cell proliferation. May act as a tumor suppressor. In Papio anubis (Olive baboon), this protein is Testin (TES).